Reading from the N-terminus, the 497-residue chain is 5'-AMP-activated protein kinase subunit gamma-3 (497 aa).

Residues 16–143 (STQTPSWSSF…SSSSTDDLDQ (128 aa)) are disordered. Residues 39 to 54 (GDSTSWPSPAMTTSAE) are compositionally biased toward polar residues. Residues 68–79 (KSQEDVEERELP) are compositionally biased toward basic and acidic residues. CBS domains lie at 204 to 265 (MATS…RSPL), 287 to 345 (CFKP…QRTL), and 363 to 423 (TFRD…HLDI). ADP-binding positions include R232, 247–252 (MLTITD), V292, 313–314 (HR), and K332. AMP contacts are provided by residues R232, 247–252 (MLTITD), V292, H313, 313–314 (HR), K332, T363, A368, 389–390 (SA), 405–408 (SRFD), R432, L440, H461, 461–462 (HR), and 477–480 (SLSD). ATP-binding positions include R232, 247 to 252 (MLTITD), V292, 313 to 314 (HR), R314, and K332. The short motif at 300–321 (LFEAVYTLIKNRIHRLPVLDPV) is the AMPK pseudosubstrate element. Residues 405-408 (SRFD), R432, L440, and 461-462 (HR) contribute to the ADP site. Residues 405 to 408 (SRFD), R432, L440, and 461 to 462 (HR) each bind ATP. The CBS 4 domain maps to 435–494 (CLEGVLSCQPHETLGEVIDRIAREQVHRLVLVDETQHLLGVVSLSDILQALVLSPAGIDA).

Belongs to the 5'-AMP-activated protein kinase gamma subunit family. As to quaternary structure, AMPK is a heterotrimer of an alpha catalytic subunit (PRKAA1 or PRKAA2), a beta (PRKAB1 or PRKAB2) and a gamma non-catalytic subunits (PRKAG1, PRKAG2 or PRKAG3). Interacts with FNIP1 and FNIP2. Phosphorylated by ULK1; leading to negatively regulate AMPK activity and suggesting the existence of a regulatory feedback loop between ULK1 and AMPK. In terms of processing, glycosylated; O-GlcNAcylated by OGT, promoting the AMP-activated protein kinase (AMPK) activity.

Functionally, AMP/ATP-binding subunit of AMP-activated protein kinase (AMPK), an energy sensor protein kinase that plays a key role in regulating cellular energy metabolism. In response to reduction of intracellular ATP levels, AMPK activates energy-producing pathways and inhibits energy-consuming processes: inhibits protein, carbohydrate and lipid biosynthesis, as well as cell growth and proliferation. AMPK acts via direct phosphorylation of metabolic enzymes, and by longer-term effects via phosphorylation of transcription regulators. AMPK also acts as a regulator of cellular polarity by remodeling the actin cytoskeleton; probably by indirectly activating myosin. The AMPK gamma3 subunit is a non-catalytic subunit with a regulatory role in muscle energy metabolism. It mediates binding to AMP, ADP and ATP, leading to AMPK activation or inhibition: AMP-binding results in allosteric activation of alpha catalytic subunit (PRKAA1 or PRKAA2) both by inducing phosphorylation and preventing dephosphorylation of catalytic subunits. ADP also stimulates phosphorylation, without stimulating already phosphorylated catalytic subunit. ATP promotes dephosphorylation of catalytic subunit, rendering the AMPK enzyme inactive. This chain is 5'-AMP-activated protein kinase subunit gamma-3 (PRKAG3), found in Bos taurus (Bovine).